The sequence spans 294 residues: ATP synthase gamma chain (294 aa).

It belongs to the ATPase gamma chain family. As to quaternary structure, F-type ATPases have 2 components, CF(1) - the catalytic core - and CF(0) - the membrane proton channel. CF(1) has five subunits: alpha(3), beta(3), gamma(1), delta(1), epsilon(1). CF(0) has three main subunits: a, b and c.

The protein resides in the cell inner membrane. Its function is as follows. Produces ATP from ADP in the presence of a proton gradient across the membrane. The gamma chain is believed to be important in regulating ATPase activity and the flow of protons through the CF(0) complex. This is ATP synthase gamma chain from Campylobacter jejuni subsp. jejuni serotype O:23/36 (strain 81-176).